Consider the following 208-residue polypeptide: Cysteine-rich protein 2 (208 aa).

An LIM zinc-binding 1 domain is found at 5–57 (CPKCDKTVYFAEKVSSLGKDWHKFCLKCERCNKTLTPGGHAEHDGKPFCHKPC). The residue at position 23 (K23) is an N6-acetyllysine. The residue at position 104 (S104) is a Phosphoserine. The LIM zinc-binding 2 domain occupies 126 to 178 (CPRCNKRVYFAEKVTSLGKDWHRPCLRCERCSKTLTPGGHAEHDGQPYCHKPC). 2 positions are modified to N6-acetyllysine: K138 and K144.

Interacts with TGFB1I1.

The polypeptide is Cysteine-rich protein 2 (Crip2) (Mus musculus (Mouse)).